Consider the following 170-residue polypeptide: Cytochrome c-type biogenesis protein CcmE (170 aa).

Over 1–7 the chain is Cytoplasmic; the sequence is MTRKKRR. The chain crosses the membrane as a helical; Signal-anchor for type II membrane protein span at residues 8-28; that stretch reads LILIAACGSVLALAVGLILYA. Topologically, residues 29–170 are periplasmic; that stretch reads MSGSIVFFRS…DSTLGPRSER (142 aa). 2 residues coordinate heme: His-122 and Tyr-126. Residues 132 to 170 form a disordered region; that stretch reads ADALKAQGRWQEGGPNRGGPAPKPATAAADSTLGPRSER.

The protein belongs to the CcmE/CycJ family.

The protein localises to the cell inner membrane. Heme chaperone required for the biogenesis of c-type cytochromes. Transiently binds heme delivered by CcmC and transfers the heme to apo-cytochromes in a process facilitated by CcmF and CcmH. In Methylobacterium radiotolerans (strain ATCC 27329 / DSM 1819 / JCM 2831 / NBRC 15690 / NCIMB 10815 / 0-1), this protein is Cytochrome c-type biogenesis protein CcmE.